The following is a 130-amino-acid chain: Small ribosomal subunit protein uS9 (130 aa).

It belongs to the universal ribosomal protein uS9 family.

This chain is Small ribosomal subunit protein uS9, found in Pseudomonas fluorescens (strain SBW25).